Here is a 644-residue protein sequence, read N- to C-terminus: 2-isopropylmalate synthase (644 aa).

The interval 1 to 40 is disordered; that stretch reads MTTSESPDAYTESFGAHTIVKPAGPPRVGQPSWNPQRASS. Over residues 31–40 the composition is skewed to polar residues; it reads PSWNPQRASS. Positions 72–346 constitute a Pyruvate carboxyltransferase domain; that stretch reads PLWCAVDLRD…DPQIDFSNID (275 aa). Mg(2+) is bound by residues aspartate 81, histidine 285, histidine 287, and asparagine 321. The regulatory domain stretch occupies residues 491-644; that stretch reads PVRPLERIRQ…VVSAVNRAAR (154 aa). Residues 575–593 form a VNTR1 repeat; that stretch reads VTIASPAQPGEAGRHASDP. The segment at 581–612 is disordered; that stretch reads AQPGEAGRHASDPVTIASPAQPGEAGRHASDP. A VNTR2 repeat occupies 594 to 612; sequence VTIASPAQPGEAGRHASDP.

Belongs to the alpha-IPM synthase/homocitrate synthase family. LeuA type 2 subfamily. Homodimer. Mg(2+) serves as cofactor.

The protein resides in the cytoplasm. It catalyses the reaction 3-methyl-2-oxobutanoate + acetyl-CoA + H2O = (2S)-2-isopropylmalate + CoA + H(+). The protein operates within amino-acid biosynthesis; L-leucine biosynthesis; L-leucine from 3-methyl-2-oxobutanoate: step 1/4. Its function is as follows. Catalyzes the condensation of the acetyl group of acetyl-CoA with 3-methyl-2-oxobutanoate (2-ketoisovalerate) to form 3-carboxy-3-hydroxy-4-methylpentanoate (2-isopropylmalate). In Mycobacterium tuberculosis (strain CDC 1551 / Oshkosh), this protein is 2-isopropylmalate synthase.